Reading from the N-terminus, the 555-residue chain is L-ascorbate oxidase homolog (555 aa).

Positions 1–23 are cleaved as a signal peptide; sequence MRGVKLLAACLYLAAAATVVVHA. Plastocyanin-like domains lie at 25 to 145 and 158 to 301; these read DPYF…LRVN and EDDY…RYEG. N-linked (GlcNAc...) asparagine glycans are attached at residues asparagine 33, asparagine 61, and asparagine 110. A disulfide bridge links cysteine 103 with cysteine 539. N-linked (GlcNAc...) asparagine glycans are attached at residues asparagine 330, asparagine 350, and asparagine 422. The 180-residue stretch at 345 to 524 folds into the Plastocyanin-like 3 domain; that stretch reads HYGKINITRT…LYASVLSPEK (180 aa).

It belongs to the multicopper oxidase family. In terms of tissue distribution, maximal expression in early binucleate microspores; declines considerably in mature trinucleate pollen.

The protein resides in the secreted. In terms of biological role, probable oxidase that may be involved in pollen tube growth. In Brassica napus (Rape), this protein is L-ascorbate oxidase homolog (Bp10).